The chain runs to 267 residues: MGSACIKVTKYFLFLFNLIFFILGAVILGFGVWILADKSSFISVLQTSSSSLRMGAYVFIGVGAVTMLMGFLGCIGAVNEVRCLLGLYFAFLLLILIAQVTAGALFYFNMGKLKQEMGGIVTELIRDYNSSREDSLQDAWDYVQAQVKCCGWVSFYNWTDNAELMNRPEVTYPCSCEVKGEEDNSLSVRKGFCEAPGNRTQSGNHPEDWPVYQEGCMEKVQAWLQENLGIILGVGVGVAIIELLGMVLSICLCRHVHSEDYSKVPKY.

The Cytoplasmic segment spans residues 1–11 (MGSACIKVTKY). The S-palmitoyl cysteine moiety is linked to residue Cys-5. Residues 12 to 32 (FLFLFNLIFFILGAVILGFGV) form a helical membrane-spanning segment. The Extracellular segment spans residues 33-53 (WILADKSSFISVLQTSSSSLR). A helical transmembrane segment spans residues 54-72 (MGAYVFIGVGAVTMLMGFL). Residues 73–83 (GCIGAVNEVRC) are Cytoplasmic-facing. The S-palmitoyl cysteine moiety is linked to residue Cys-74. The chain crosses the membrane as a helical span at residues 84 to 110 (LLGLYFAFLLLILIAQVTAGALFYFNM). Residues 111-228 (GKLKQEMGGI…KVQAWLQENL (118 aa)) are Extracellular-facing. N-linked (GlcNAc...) asparagine glycans are attached at residues Asn-129, Asn-157, and Asn-198. Residues 229 to 250 (GIILGVGVGVAIIELLGMVLSI) traverse the membrane as a helical segment. The Cytoplasmic segment spans residues 251–267 (CLCRHVHSEDYSKVPKY).

This sequence belongs to the tetraspanin (TM4SF) family. Forms homooligomers. Interacts directly with IGSF8. Interacts with EGFR. Interacts with VEGFA and PDGFB. Interacts with ITGA4. Interacts with ITGA6; this interaction reduces ITGA6 cell surface expression. Interacts with ITGB1. Interacts with TLR4; this interaction inhibits TLR4-mediated signaling pathway. Interacts with TLR9. Interacts with PLAUR. Post-translationally, palmitoylated. Palmitoylation contributes to oligomerization and surface expression. As to expression, lymphoid specific.

The protein resides in the cell membrane. The protein localises to the cytoplasmic vesicle. It is found in the phagosome. Structural component of specialized membrane microdomains known as tetraspanin-enriched microdomains (TERMs), which act as platforms for receptor clustering and signaling. Participates thereby in diverse biological functions such as cell signal transduction, adhesion, migration and protein trafficking. Acts as a attenuator of EGF signaling, facilitating ligand-induced endocytosis of the receptor and its subsequent desensitization. Mechanistically, modulates ligand-induced ubiquitination and trafficking of EGFR via E3 ligase CBL phosphorylation by PKC. Increases cell-matrix adhesion by regulating the membrane organization of integrin alpha4/ITA4. Modulates adhesion and suppresses cell migration through other integrins such as the alpha6/ITGA6 and beta1/ITGB1. Decreases cell-associated plasminogen activation by interfering with the interaction between urokinase-type plasminogen activator/PLAU and its receptor PLAUR. Associates with CD4 or CD8 and delivers costimulatory signals for the TCR/CD3 pathway. Plays a role in TLR9 trafficking to acidified CpG-containing compartments by controlling interaction between TLR9 and VAMP3 and subsequent myddosome assembly. Inhibits LPS-induced inflammatory response by preventing binding of LPS to TLR4 on the cell surface. Plays a role in the activation of macrophages into anti-inflammatory phenotypes. Independently of Toll-like receptor (TLR) signaling, is recruited to pathogen-containing phagosomes prior to fusion with lysosomes and thereby participates in antigen presentation. Also acts to control angiogenesis and switch angiogenic milieu to quiescent state by binding and sequestering VEGFA and PDGFB to inhibit the signaling they trigger via their respective cell surface receptor. The chain is CD82 antigen (CD82) from Homo sapiens (Human).